A 536-amino-acid chain; its full sequence is Signal peptide peptidase-like 5 (536 aa).

The first 29 residues, 1 to 29, serve as a signal peptide directing secretion; sequence MSLPPFTCRLLAAAAALYLIGLLCVGADT. Topologically, residues 30-186 are lumenal; sequence KDVTAPKIPG…VELLLYAPKS (157 aa). Positions 94-170 constitute a PA domain; sequence SNLTSKLSWS…TSSGDALKKS (77 aa). Residues Asn-95 and Asn-151 are each glycosylated (N-linked (GlcNAc...) asparagine). A helical membrane pass occupies residues 187 to 207; that stretch reads PIVDYAVVFLWLMSVGTVFVA. At 208-243 the chain is on the cytoplasmic side; sequence SVWSHVTSPKKNDEQYDELSPKKSSNVDATKGGAEE. The interval 218–238 is disordered; sequence KNDEQYDELSPKKSSNVDATK. A helical transmembrane segment spans residues 244–264; that stretch reads ETLDISAMGAVIFVISASTFL. Residues 265 to 273 lie on the Lumenal side of the membrane; sequence VLLFFFMSS. The helical transmembrane segment at 274–296 threads the bilayer; that stretch reads WFILILTIFFVIGGMQGMHNINV. At 297–318 the chain is on the cytoplasmic side; it reads TLITRRCSKCGQKNLKLPLLGN. The helical transmembrane segment at 319-339 threads the bilayer; the sequence is TSILSLVVLLFCFVVAILWFM. Over 340 to 344 the chain is Lumenal; sequence NRKTS. A helical transmembrane segment spans residues 345–365; it reads HAWAGQDIFGICMMINVLQVA. The Cytoplasmic segment spans residues 366–374; sequence RLPNIRVAT. A helical transmembrane segment spans residues 375-395; the sequence is ILLCCAFFYDIFWVFISPLIF. The active site involves Asp-384. Residues 396–428 lie on the Lumenal side of the membrane; it reads KQSVMIAVARGSKDTGESIPMLLRIPRLSDPWG. A helical transmembrane segment spans residues 429-449; sequence GYNMIGFGDILFPGLLICFIF. Residue Asp-437 is part of the active site. Topologically, residues 450-463 are cytoplasmic; that stretch reads RFDKENNKGVSNGY. A helical membrane pass occupies residues 464-484; sequence FPWLMFGYGLGLFLTYLGLYV. Topologically, residues 485 to 489 are lumenal; sequence MNGHG. The helical transmembrane segment at 490–510 threads the bilayer; that stretch reads QPALLYLVPCTLGITVILGLV. A PAL motif is present at residues 491–493; that stretch reads PAL. Residues 511 to 536 lie on the Cytoplasmic side of the membrane; sequence RKELRDLWNYGTQQPSAADVNPSPEA.

It belongs to the peptidase A22B family. Glycosylated.

It localises to the endosome membrane. In terms of biological role, intramembrane-cleaving aspartic protease (I-CLiP) that cleaves type II membrane signal peptides in the hydrophobic plane of the membrane. The polypeptide is Signal peptide peptidase-like 5 (SPPL5) (Arabidopsis thaliana (Mouse-ear cress)).